A 764-amino-acid polypeptide reads, in one-letter code: Plasma membrane fusion protein prm-1 (764 aa).

Residues 1 to 61 lie on the Extracellular side of the membrane; the sequence is MVYNEKNGGG…YLGLRARLSQ (61 aa). Residues 62–82 form a helical membrane-spanning segment; sequence LWFNRWTILLILVLIRVIILT. The Cytoplasmic segment spans residues 83–149; it reads ANLKENLGDA…LKMILTGVQA (67 aa). Residues 150–170 traverse the membrane as a helical segment; it reads IIMFVINMYIGTFACLVAAFI. Topologically, residues 171–334 are extracellular; the sequence is HGGLHVATAV…SLITLVYKAK (164 aa). N-linked (GlcNAc...) asparagine glycosylation is found at Asn-271 and Asn-315. Residues 335 to 355 form a helical membrane-spanning segment; sequence IAFLVVIIILALLAIFVMGYI. At 356-424 the chain is on the cytoplasmic side; it reads EYRGFKRERE…AFAYATSLPA (69 aa). The chain crosses the membrane as a helical span at residues 425–445; sequence LFVLSLAVAGMLSCLFQWVLL. The Extracellular segment spans residues 446–624; it reads RQIEKKAPEL…NGVIQEALIT (179 aa). 3 N-linked (GlcNAc...) asparagine glycosylation sites follow: Asn-479, Asn-508, and Asn-527. The helical transmembrane segment at 625–645 threads the bilayer; that stretch reads LGLFLTYVIVVLIGVMGALIG. Residues 646-764 lie on the Cytoplasmic side of the membrane; the sequence is WATPGKTRGE…EKVPGYFTPI (119 aa). Disordered stretches follow at residues 653-701 and 735-754; these read RGEG…GGGG and HQRT…PHGD.

The protein belongs to the PRM1 family.

The protein resides in the cell membrane. In terms of biological role, involved in cell fusion during mating by stabilizing the plasma membrane fusion event. This Neurospora crassa (strain ATCC 24698 / 74-OR23-1A / CBS 708.71 / DSM 1257 / FGSC 987) protein is Plasma membrane fusion protein prm-1 (prm-1).